A 184-amino-acid polypeptide reads, in one-letter code: ATP synthase subunit b, chloroplastic (184 aa).

Residues 27-49 form a helical membrane-spanning segment; it reads LATNPINLSVVLGVLIFFGKGVL.

Belongs to the ATPase B chain family. As to quaternary structure, F-type ATPases have 2 components, F(1) - the catalytic core - and F(0) - the membrane proton channel. F(1) has five subunits: alpha(3), beta(3), gamma(1), delta(1), epsilon(1). F(0) has four main subunits: a(1), b(1), b'(1) and c(10-14). The alpha and beta chains form an alternating ring which encloses part of the gamma chain. F(1) is attached to F(0) by a central stalk formed by the gamma and epsilon chains, while a peripheral stalk is formed by the delta, b and b' chains.

It is found in the plastid. Its subcellular location is the chloroplast thylakoid membrane. In terms of biological role, f(1)F(0) ATP synthase produces ATP from ADP in the presence of a proton or sodium gradient. F-type ATPases consist of two structural domains, F(1) containing the extramembraneous catalytic core and F(0) containing the membrane proton channel, linked together by a central stalk and a peripheral stalk. During catalysis, ATP synthesis in the catalytic domain of F(1) is coupled via a rotary mechanism of the central stalk subunits to proton translocation. Functionally, component of the F(0) channel, it forms part of the peripheral stalk, linking F(1) to F(0). This chain is ATP synthase subunit b, chloroplastic, found in Citrus sinensis (Sweet orange).